The following is a 182-amino-acid chain: Putative manganese efflux pump MntP (182 aa).

6 helical membrane-spanning segments follow: residues 6-26 (LIPL…VSLG), 37-57 (ILYI…IGMV), 71-91 (HFAG…SSIL), 101-121 (IGIS…SVGL), 131-151 (VITI…GLFI), and 162-182 (YGEI…LFPI).

This sequence belongs to the MntP (TC 9.B.29) family.

The protein localises to the cell membrane. Probably functions as a manganese efflux pump. The polypeptide is Putative manganese efflux pump MntP (Bacillus cereus (strain AH187)).